The chain runs to 1014 residues: SUMO-specific isopeptidase USPL1 (1014 aa).

Disordered stretches follow at residues 137 to 158 (TFTDQQSAPAETISLDKTEEQP) and 275 to 318 (EEKP…VSDE). The segment covering 275–289 (EEKPVSLVHTEDQHL) has biased composition (basic and acidic residues). Positions 355-636 (LFWKNEENMC…EFHILFWETD (282 aa)) constitute a USP domain. Catalysis depends on Cys-364, which acts as the Nucleophile. The segment at 364 to 631 (CWLDAMLVML…PFPSSEFHIL (268 aa)) is SUMO-binding. His-592 functions as the Proton acceptor in the catalytic mechanism. Disordered regions lie at residues 794 to 823 (HPSFQSTPIRPPPPLPPAPKPKPSLQYDKH) and 844 to 867 (NSQPKQISLPGGLNPSVKKTAGQE). Positions 802–815 (IRPPPPLPPAPKPK) are enriched in pro residues.

It belongs to the peptidase C19 family.

The protein localises to the nucleus. It localises to the cajal body. Its function is as follows. SUMO-specific isopeptidase involved in protein desumoylation. Specifically binds SUMO proteins with a higher affinity for sumo2 and sumo3 which it cleaves more efficiently. Also able to process full-length SUMO proteins to their mature forms. Plays a key role in RNA polymerase-II-mediated snRNA transcription in the Cajal bodies. Is a component of complexes that can bind to U snRNA genes. The chain is SUMO-specific isopeptidase USPL1 (uspl1) from Danio rerio (Zebrafish).